The sequence spans 248 residues: ATP synthase subunit a, chloroplastic (248 aa).

5 helical membrane-spanning segments follow: residues 37–57 (AQVL…SIVA), 96–116 (VPFI…GALF), 135–155 (INTT…AGLH), 200–220 (LVVA…MMFL), and 221–241 (GLFT…AYIG).

The protein belongs to the ATPase A chain family. In terms of assembly, F-type ATPases have 2 components, CF(1) - the catalytic core - and CF(0) - the membrane proton channel. CF(1) has five subunits: alpha(3), beta(3), gamma(1), delta(1), epsilon(1). CF(0) has four main subunits: a, b, b' and c.

The protein resides in the plastid. It is found in the chloroplast thylakoid membrane. In terms of biological role, key component of the proton channel; it plays a direct role in the translocation of protons across the membrane. This is ATP synthase subunit a, chloroplastic from Angiopteris evecta (Mule's foot fern).